The chain runs to 647 residues: MMLPADFFVPVSKMMLLALLLSIIICCGGAQRSEPMFTAVTDTVLPQDYDSNPTQLNYGVAITDVDNDGDFEVVVAGYNGPNLVLKYIKEKGHLVNIAVDERSSPYYALRDRQGNAIGVAACDIDGDGREEIYFLNTNNAFSGIATYSDKLFTFRNGRWEDLFSDEVNLRRGVANRFSGRSVACIDRKGSGRYSFYIANYANGNVGPHALIELDETASNLSRGIIVLSNVAAELGLNKYTGGRGIAVGPIVNSAASDIFCDNENGPNFLFQNKGDGTFVDIASSTGVDDVYQHGRGVALADFNRDGKVDIVYGNWNGPHRLFLQMNTNGKVRFRDIATQKFSMPSPIRTVIAADFDNDQELEVFFNNIAYRGPSANRMFRVGRREHADPFMEELNPGDASEPDGRGTGGAVTDFDGDGMLDLILSHGESMAQPLSVFKGKQGLKNNWLRVIPRTKFGAFARGAKVVLYTKKSGAHLRIIDGGSGYLCEMEPVAHFGLGKDEASSLEVTWPDGKIFTRSVAEGEINSVLDIAYPHEDDTVTKPTDIECGQGFSVNENGRCTDTDECIQFPFVCPREKPVCINTYGGYKCRPNRRCSRGFEPNEDGTACVAQVAYFGSYPSSASRSQALFLHCTASLLGLGFYFQIYTL.

The N-terminal stretch at 1–30 is a signal peptide; it reads MMLPADFFVPVSKMMLLALLLSIIICCGGA. The FG-GAP 1; atypical repeat unit spans residues 48–90; that stretch reads DYDSNPTQLNYGVAITDVDNDGDFEVVVAGYNGPNLVLKYIKE. The FG-GAP 2; atypical repeat unit spans residues 107 to 149; that stretch reads YALRDRQGNAIGVAACDIDGDGREEIYFLNTNNAFSGIATYSD. The FG-GAP 3; atypical repeat unit spans residues 285-335; sequence TGVDDVYQHGRGVALADFNRDGKVDIVYGNWNGPHRLFLQMNTNGKVRFRD. One copy of the FG-GAP 4; atypical repeat lies at 397–439; that stretch reads GDASEPDGRGTGGAVTDFDGDGMLDLILSHGESMAQPLSVFKG. The region spanning 561-607 is the EGF-like domain; that stretch reads DTDECIQFPFVCPREKPVCINTYGGYKCRPNRRCSRGFEPNEDGTAC. 3 disulfide bridges follow: Cys-565–Cys-579, Cys-572–Cys-588, and Cys-594–Cys-607.

It is found in the secreted. It localises to the extracellular space. The protein localises to the extracellular matrix. The chain is Cartilage acidic protein 1 (crtac1) from Xenopus tropicalis (Western clawed frog).